The primary structure comprises 480 residues: Probable tRNA N6-adenosine threonylcarbamoyltransferase, mitochondrial (480 aa).

The N-terminal 86 residues, 1–86 (MVRLFLTLSP…NPNFDDNLVV (86 aa)), are a transit peptide targeting the mitochondrion. A divalent metal cation is bound by residues histidine 194 and histidine 198. Residues 217-221 (LISGG), aspartate 250, glycine 265, glutamate 269, 373-374 (SN), and threonine 401 contribute to the substrate site. Aspartate 402 is a binding site for a divalent metal cation.

This sequence belongs to the KAE1 / TsaD family. Homodimer. A divalent metal cation is required as a cofactor. As to expression, expressed in young developing leaves, roots, flowers and siliques.

It is found in the mitochondrion inner membrane. It carries out the reaction L-threonylcarbamoyladenylate + adenosine(37) in tRNA = N(6)-L-threonylcarbamoyladenosine(37) in tRNA + AMP + H(+). Functionally, required for the formation of a threonylcarbamoyl group on adenosine at position 37 (t(6)A37) in mitochondrial tRNAs that read codons beginning with adenine. Probably involved in the transfer of the threonylcarbamoyl moiety of threonylcarbamoyl-AMP (TC-AMP) to the N6 group of A37. Involved in mitochondrial genome maintenance. May have a role in embryonic development in plants. This chain is Probable tRNA N6-adenosine threonylcarbamoyltransferase, mitochondrial, found in Arabidopsis thaliana (Mouse-ear cress).